Here is a 150-residue protein sequence, read N- to C-terminus: Small ribosomal subunit protein uS7c (150 aa).

The protein belongs to the universal ribosomal protein uS7 family. Part of the 30S ribosomal subunit.

The protein localises to the plastid. It is found in the chloroplast. Functionally, one of the primary rRNA binding proteins, it binds directly to 16S rRNA where it nucleates assembly of the head domain of the 30S subunit. This is Small ribosomal subunit protein uS7c (rps7) from Huperzia lucidula (Shining clubmoss).